The chain runs to 213 residues: Pyridoxine/pyridoxamine 5'-phosphate oxidase 2 (213 aa).

Substrate-binding positions include 9–12 (RQRY) and Lys67. FMN contacts are provided by residues 62-67 (RTVLLK), 77-78 (FT), Lys84, and Gln106. Tyr124, Arg128, and Ser132 together coordinate substrate. FMN-binding positions include 141–142 (QS) and Trp186. Residue 192-194 (RLH) participates in substrate binding. Arg196 is an FMN binding site.

It belongs to the pyridoxamine 5'-phosphate oxidase family. Homodimer. Requires FMN as cofactor.

It carries out the reaction pyridoxamine 5'-phosphate + O2 + H2O = pyridoxal 5'-phosphate + H2O2 + NH4(+). The enzyme catalyses pyridoxine 5'-phosphate + O2 = pyridoxal 5'-phosphate + H2O2. The protein operates within cofactor metabolism; pyridoxal 5'-phosphate salvage; pyridoxal 5'-phosphate from pyridoxamine 5'-phosphate: step 1/1. Its pathway is cofactor metabolism; pyridoxal 5'-phosphate salvage; pyridoxal 5'-phosphate from pyridoxine 5'-phosphate: step 1/1. In terms of biological role, catalyzes the oxidation of either pyridoxine 5'-phosphate (PNP) or pyridoxamine 5'-phosphate (PMP) into pyridoxal 5'-phosphate (PLP). The protein is Pyridoxine/pyridoxamine 5'-phosphate oxidase 2 of Hydrogenovibrio crunogenus (strain DSM 25203 / XCL-2) (Thiomicrospira crunogena).